Here is a 521-residue protein sequence, read N- to C-terminus: GMP synthase [glutamine-hydrolyzing] (521 aa).

The Glutamine amidotransferase type-1 domain maps to 8–203 (KILILDFGAQ…VVDVCGCQTL (196 aa)). Residue cysteine 85 is the Nucleophile of the active site. Active-site residues include histidine 177 and glutamate 179. A GMPS ATP-PPase domain is found at 204–396 (WTAANIIDDQ…LGLPRTMVYR (193 aa)). 231–237 (SGGVDSS) lines the ATP pocket.

As to quaternary structure, homodimer.

It carries out the reaction XMP + L-glutamine + ATP + H2O = GMP + L-glutamate + AMP + diphosphate + 2 H(+). It participates in purine metabolism; GMP biosynthesis; GMP from XMP (L-Gln route): step 1/1. Functionally, catalyzes the synthesis of GMP from XMP. This is GMP synthase [glutamine-hydrolyzing] from Stenotrophomonas maltophilia (strain K279a).